The following is a 296-amino-acid chain: Fructose-bisphosphate aldolase class 1 (296 aa).

The active-site Proton acceptor is the E175. The active-site Schiff-base intermediate with dihydroxyacetone-P is K212.

Belongs to the class I fructose-bisphosphate aldolase family.

The catalysed reaction is beta-D-fructose 1,6-bisphosphate = D-glyceraldehyde 3-phosphate + dihydroxyacetone phosphate. It functions in the pathway carbohydrate degradation; glycolysis; D-glyceraldehyde 3-phosphate and glycerone phosphate from D-glucose: step 4/4. The polypeptide is Fructose-bisphosphate aldolase class 1 (Staphylococcus aureus (strain Mu3 / ATCC 700698)).